The primary structure comprises 160 residues: Transcription elongation factor GreA (160 aa).

The stretch at 3–84 (SIVNDKILLT…SKAKIIKADL (82 aa)) forms a coiled coil.

It belongs to the GreA/GreB family.

Necessary for efficient RNA polymerase transcription elongation past template-encoded arresting sites. The arresting sites in DNA have the property of trapping a certain fraction of elongating RNA polymerases that pass through, resulting in locked ternary complexes. Cleavage of the nascent transcript by cleavage factors such as GreA or GreB allows the resumption of elongation from the new 3'terminus. GreA releases sequences of 2 to 3 nucleotides. The chain is Transcription elongation factor GreA from Mesomycoplasma hyopneumoniae (strain 7448) (Mycoplasma hyopneumoniae).